Consider the following 371-residue polypeptide: Transaldolase (371 aa).

Lysine 132 is covalently cross-linked (Isoglutamyl lysine isopeptide (Lys-Gln) (interchain with Q-Cter in protein Pup)). Lysine 142 functions as the Schiff-base intermediate with substrate in the catalytic mechanism.

It belongs to the transaldolase family. Type 2 subfamily.

It localises to the cytoplasm. It catalyses the reaction D-sedoheptulose 7-phosphate + D-glyceraldehyde 3-phosphate = D-erythrose 4-phosphate + beta-D-fructose 6-phosphate. The protein operates within carbohydrate degradation; pentose phosphate pathway; D-glyceraldehyde 3-phosphate and beta-D-fructose 6-phosphate from D-ribose 5-phosphate and D-xylulose 5-phosphate (non-oxidative stage): step 2/3. In terms of biological role, transaldolase is important for the balance of metabolites in the pentose-phosphate pathway. The protein is Transaldolase (tal) of Mycolicibacterium smegmatis (strain ATCC 700084 / mc(2)155) (Mycobacterium smegmatis).